The chain runs to 127 residues: Fumarate reductase subunit C (127 aa).

3 consecutive transmembrane segments (helical) span residues 30-50 (ATVLPLIFFTICLLVGLGSLV), 67-87 (IVVALNIVALAGSLFHAQTFF), and 107-127 (VVVLAQWAAVAAITLLVLVIV).

It belongs to the FrdC family. In terms of assembly, part of an enzyme complex containing four subunits: a flavoprotein (FrdA), an iron-sulfur protein (FrdB), and two hydrophobic anchor proteins (FrdC and FrdD).

It is found in the cell inner membrane. In terms of biological role, anchors the catalytic components of the fumarate reductase complex to the cell membrane, binds quinones. This Aliivibrio fischeri (strain ATCC 700601 / ES114) (Vibrio fischeri) protein is Fumarate reductase subunit C.